We begin with the raw amino-acid sequence, 947 residues long: Protein RRC1-like (947 aa).

Residues Met1–Pro11 are compositionally biased toward basic and acidic residues. 2 disordered regions span residues Met1–Gln35 and Pro63–Pro167. Residues Gly12–Lys34 show a composition bias toward basic residues. Composition is skewed to basic and acidic residues over residues Asn66 to Ser84 and Lys104 to Ser155. The 82-residue stretch at Thr187–Val268 folds into the RRM domain. The SURP motif repeat unit spans residues Ile336–Tyr379. The disordered stretch occupies residues Pro412–Lys434. The region spanning Leu444–Arg589 is the CID domain. One can recognise an SAP domain in the interval Leu638–Lys672. Disordered regions lie at residues Arg752 to Glu797 and Gly846 to Arg947. 3 stretches are compositionally biased toward basic and acidic residues: residues Leu854 to Ser876, Leu888 to Asp916, and Ser924 to Arg947.

In terms of tissue distribution, expressed in leaves, inflorescence stems, roots, flower buds, open flowers and siliques.

Its function is as follows. Probable SR-like splicing factor. The protein is Protein RRC1-like of Arabidopsis thaliana (Mouse-ear cress).